The primary structure comprises 432 residues: Phytase AppA (432 aa).

An N-terminal signal peptide occupies residues Met1–Ala22. 1D-myo-inositol hexakisphosphate is bound at residue Arg38. His39 acts as the Nucleophile in catalysis. Residues Arg42–Lys46 and Arg114 each bind 1D-myo-inositol hexakisphosphate. Cystine bridges form between Cys99-Cys130, Cys155-Cys430, Cys200-Cys210, and Cys404-Cys413. Residues Arg289 and His325–Thr327 each bind 1D-myo-inositol hexakisphosphate. The active-site Proton donor is Asp326.

It belongs to the histidine acid phosphatase family. As to quaternary structure, monomer.

The protein resides in the periplasm. The catalysed reaction is 1D-myo-inositol hexakisphosphate + H2O = 1D-myo-inositol 1,2,3,4,5-pentakisphosphate + phosphate. It catalyses the reaction 1D-myo-inositol 1,2,3,4,5-pentakisphosphate + H2O = 1D-myo-inositol 2,3,4,5-tetrakisphosphate + phosphate. It carries out the reaction 1D-myo-inositol 2,3,4,5-tetrakisphosphate + H2O = 1D-myo-inositol 2,4,5-triphosphate + phosphate. The enzyme catalyses 1D-myo-inositol 2,4,5-triphosphate + H2O = 1D-myo-inositol 2,5-bisphosphate + phosphate. The catalysed reaction is 1D-myo-inositol 2,5-bisphosphate + H2O = 1D-myo-inositol 2-phosphate + phosphate. It catalyses the reaction GTP + H2O = GDP + phosphate + H(+). With respect to regulation, contains three consecutive and one non-consecutive disulfide bonds and shows a strong dependence on DsbC for its full activity. Competitively inhibited by tartaric acid and by sodium fluorid. Its function is as follows. Catalyzes the hydrolysis of phytate (or myo-inositol hexakisphosphate, an indigestible organic form of phosphorus that is found in many plant tissues) to myo-inositol and inorganic phosphate. Dephosphorylates phytate in a stereospecific way by sequential removal of phosphate groups to produce myo-inositol 2-monophosphate. Also shows phosphoanhydride phosphatase activity and hydrolyzes the distal phosphoryl residues of GTP, the 5'-beta-phosphoryl residue of the regulatory nucleotide ppGpp and tripolyphosphates. Does not split most phosphomonoesters with the exception of the synthetic substrate p-nitrophenyl phosphate (pNPP), 2,3-bisphosphoglycerate and fructose 1,6-bisphosphate. The sequence is that of Phytase AppA from Escherichia coli (strain K12).